We begin with the raw amino-acid sequence, 379 residues long: MFLKSLHLRHFRNYSEQSVTFAAPKTILVGDNAQGKSNLLEAVEWLATLQSHRTHRDRDLIQQGHESAQIEATLERQGVPLDLAVSLRPSSGRVLRVNGCTVKRTADFLGQLNAVEFSCLDLELVRGTPAIRRNWLDRILLQLEPLYSQLLQTYQKALRQRNALLKQAGSQGWDEALWQAWNQQLVINGTRIIRRRQRLIERLAPLAQDWHRVLSGDRETLTLSYESHVPLGDGTSEAIVAAFSEALATRRAIEFLQKTSLVGPHRDDVGFCLNAQSARQFASQGQQRTLVLALKLAELALVESVVGDTPLLLLDDVLAELDLQRQGILLEVMGDRYQTLMTTTHLAPFAAPWRQQAQILKVTAGTIASVSDTAAQTSD.

Residue 30-37 (GDNAQGKS) coordinates ATP.

It belongs to the RecF family.

It is found in the cytoplasm. The RecF protein is involved in DNA metabolism; it is required for DNA replication and normal SOS inducibility. RecF binds preferentially to single-stranded, linear DNA. It also seems to bind ATP. The polypeptide is DNA replication and repair protein RecF (Thermosynechococcus vestitus (strain NIES-2133 / IAM M-273 / BP-1)).